A 264-amino-acid chain; its full sequence is 5'-nucleotidase SurE (264 aa).

4 residues coordinate a divalent metal cation: aspartate 8, aspartate 9, serine 39, and asparagine 95.

The protein belongs to the SurE nucleotidase family. Requires a divalent metal cation as cofactor.

It is found in the cytoplasm. It carries out the reaction a ribonucleoside 5'-phosphate + H2O = a ribonucleoside + phosphate. In terms of biological role, nucleotidase that shows phosphatase activity on nucleoside 5'-monophosphates. In Syntrophomonas wolfei subsp. wolfei (strain DSM 2245B / Goettingen), this protein is 5'-nucleotidase SurE.